Reading from the N-terminus, the 425-residue chain is Imidazolonepropionase (425 aa).

Positions 78 and 80 each coordinate Fe(3+). Residues histidine 78 and histidine 80 each contribute to the Zn(2+) site. 4-imidazolone-5-propanoate is bound by residues arginine 87, tyrosine 150, and histidine 183. Tyrosine 150 lines the N-formimidoyl-L-glutamate pocket. Histidine 248 contacts Fe(3+). Residue histidine 248 participates in Zn(2+) binding. Residue glutamine 251 coordinates 4-imidazolone-5-propanoate. A Fe(3+)-binding site is contributed by aspartate 323. Aspartate 323 is a binding site for Zn(2+). Asparagine 325 and glycine 327 together coordinate N-formimidoyl-L-glutamate. Threonine 328 contacts 4-imidazolone-5-propanoate.

Belongs to the metallo-dependent hydrolases superfamily. HutI family. Requires Zn(2+) as cofactor. It depends on Fe(3+) as a cofactor.

The protein resides in the cytoplasm. It catalyses the reaction 4-imidazolone-5-propanoate + H2O = N-formimidoyl-L-glutamate. It participates in amino-acid degradation; L-histidine degradation into L-glutamate; N-formimidoyl-L-glutamate from L-histidine: step 3/3. Functionally, catalyzes the hydrolytic cleavage of the carbon-nitrogen bond in imidazolone-5-propanoate to yield N-formimidoyl-L-glutamate. It is the third step in the universal histidine degradation pathway. This Polaromonas sp. (strain JS666 / ATCC BAA-500) protein is Imidazolonepropionase.